The following is a 108-amino-acid chain: Large ribosomal subunit protein uL24 (108 aa).

It belongs to the universal ribosomal protein uL24 family. In terms of assembly, part of the 50S ribosomal subunit.

Its function is as follows. One of two assembly initiator proteins, it binds directly to the 5'-end of the 23S rRNA, where it nucleates assembly of the 50S subunit. One of the proteins that surrounds the polypeptide exit tunnel on the outside of the subunit. The protein is Large ribosomal subunit protein uL24 of Pelobacter propionicus (strain DSM 2379 / NBRC 103807 / OttBd1).